The primary structure comprises 623 residues: MVGHLSEGAIEVMIQQENTSIKPILQVINIRPISTGNRSPRYRLLMSDGLNTLSSFMLATQLNTLVEGGQLASNCVCQVHKFIVNTLKDGRKVVVLMDLEVMKSAEDVGLKIGNPVPYNEGYGQQQQQQQQQQQQAVPSPASAATPPASKPQPQNGSLGMGSTAAKAYGASKPFGKPAGTGLLQPSGGTQSKVVPIASLTPYQSKWTICARVTNKSQIRTWSNSRGEGKLFSLELVDESGEIRATAFNEQVDKFFPLIEVNKVYYFSKGALKIANKQFSAVKNDYEMTFNNETSVLPCEDGHHLPTVQFDFTGIGDLESKAKDALVDIIGICKSYEDSIKITVKSNNREVAKRNIYLMDMSGKVVTTTLWGEDADKFDGSRQPVMAIKGARVSDFGGRSLSVLSSSTVIVNPDIPEAYKLRGWFDSEGQALDGVSISDHRSGGAGGGNTNWKTLHEAKSENLGQGDKADYFSTVAAVVFLRKENCMYQACPTQDCNKKVIDQQNGLYRCEKCDREFPNFKYRMILSANIADFQENQWVTCFQESAEAILGQNTMYLGELKEKNEQAFEEVFQNANFRSFTFRIRVKLETYNDESRIKATVMDVKPVDFRDYGRRLIANIRKNM.

The residue at position 1 (Met-1) is an N-acetylmethionine. Residues Lys-22 and Lys-88 each participate in a glycyl lysine isopeptide (Lys-Gly) (interchain with G-Cter in ubiquitin) cross-link. A disordered region spans residues 116-163 (VPYNEGYGQQQQQQQQQQQQAVPSPASAATPPASKPQPQNGSLGMGST). Residues 124-154 (QQQQQQQQQQQQAVPSPASAATPPASKPQPQ) show a composition bias toward low complexity. An N6-acetyllysine; alternate mark is found at Lys-172 and Lys-176. Glycyl lysine isopeptide (Lys-Gly) (interchain with G-Cter in ubiquitin); alternate cross-links involve residues Lys-172 and Lys-176. Residue Thr-189 is modified to Phosphothreonine. Lys-192 participates in a covalent cross-link: Glycyl lysine isopeptide (Lys-Gly) (interchain with G-Cter in ubiquitin). The residue at position 200 (Thr-200) is a Phosphothreonine. Residues 206-290 (WTICARVTNK…VKNDYEMTFN (85 aa)) constitute a DNA-binding region (OB). Residues Lys-229 and Lys-253 each participate in a glycyl lysine isopeptide (Lys-Gly) (interchain with G-Cter in ubiquitin) cross-link. Lys-268 is subject to N6-acetyllysine; alternate. A Glycyl lysine isopeptide (Lys-Gly) (interchain with G-Cter in ubiquitin); alternate cross-link involves residue Lys-268. Glycyl lysine isopeptide (Lys-Gly) (interchain with G-Cter in ubiquitin) cross-links involve residues Lys-276 and Lys-340. Phosphoserine is present on Ser-393. A Glycyl lysine isopeptide (Lys-Gly) (interchain with G-Cter in ubiquitin) cross-link involves residue Lys-419. Residue Lys-458 forms a Glycyl lysine isopeptide (Lys-Gly) (interchain with G-Cter in SUMO) linkage. Lys-467 is covalently cross-linked (Glycyl lysine isopeptide (Lys-Gly) (interchain with G-Cter in ubiquitin)). A C4-type zinc finger spans residues 490 to 512 (CPTQDCNKKVIDQQNGLYRCEKC). Lys-562 is covalently cross-linked (Glycyl lysine isopeptide (Lys-Gly) (interchain with G-Cter in ubiquitin)). Residue Lys-586 forms a Glycyl lysine isopeptide (Lys-Gly) (interchain with G-Cter in SUMO) linkage.

It belongs to the replication factor A protein 1 family. In terms of assembly, component of the canonical replication protein A complex (RPA), a heterotrimer composed of RPA1, RPA2 and RPA3. The DNA-binding activity may reside exclusively on the RPA1 subunit. Interacts with PRPF19; the PRP19-CDC5L complex is recruited to the sites of DNA repair where it ubiquitinates the replication protein A complex (RPA). Interacts with RIPK1. Interacts with the polymerase alpha subunit POLA1/p180; this interaction stabilizes the replicative complex and reduces the misincorporation rate of DNA polymerase alpha by acting as a fidelity clamp. Interacts with RAD51 and SENP6 to regulate DNA repair. Interacts with HELB; this interaction promotes HELB recruitment to chromatin following DNA damage. Interacts with PRIMPOL; leading to recruit PRIMPOL on chromatin and stimulate its DNA primase activity. Interacts with XPA; the interaction is direct and associates XPA with the RPA complex. Interacts with ETAA1; the interaction is direct and promotes ETAA1 recruitment at stalled replication forks. Interacts with RPA1; this interaction associates HROB with the RPA complex. Interacts (when poly-ADP-ribosylated) with HTATSF1. DNA damage-induced 'Lys-63'-linked polyubiquitination by PRPF19 mediates ATRIP recruitment to the RPA complex at sites of DNA damage and activation of ATR. Ubiquitinated by RFWD3 at stalled replication forks in response to DNA damage: ubiquitination by RFWD3 does not lead to degradation by the proteasome and promotes removal of the RPA complex from stalled replication forks, promoting homologous recombination. Post-translationally, sumoylated on lysine residues Lys-458 and Lys-586, with Lys-458 being the major site. Sumoylation promotes recruitment of RAD51 to the DNA damage foci to initiate DNA repair through homologous recombination. Desumoylated by SENP6. In terms of processing, poly-ADP-ribosylated by PARP1; promoting recruitment of HTATSF1.

The protein resides in the nucleus. It localises to the PML body. Its function is as follows. As part of the heterotrimeric replication protein A complex (RPA/RP-A), binds and stabilizes single-stranded DNA intermediates, that form during DNA replication or upon DNA stress. It prevents their reannealing and in parallel, recruits and activates different proteins and complexes involved in DNA metabolism. Thereby, it plays an essential role both in DNA replication and the cellular response to DNA damage. In the cellular response to DNA damage, the RPA complex controls DNA repair and DNA damage checkpoint activation. Through recruitment of ATRIP activates the ATR kinase a master regulator of the DNA damage response. It is required for the recruitment of the DNA double-strand break repair factors RAD51 and RAD52 to chromatin in response to DNA damage. Also recruits to sites of DNA damage proteins like XPA and XPG that are involved in nucleotide excision repair and is required for this mechanism of DNA repair. Also plays a role in base excision repair (BER) probably through interaction with UNG. Also recruits SMARCAL1/HARP, which is involved in replication fork restart, to sites of DNA damage. May also play a role in telomere maintenance. The chain is Replication protein A 70 kDa DNA-binding subunit (Rpa1) from Mus musculus (Mouse).